Here is a 249-residue protein sequence, read N- to C-terminus: Cell division protein FtsQ (249 aa).

Topologically, residues 1–6 (MKFILF) are cytoplasmic. Residues 7–23 (ALLVSAGSWYGWKQLHS) traverse the membrane as a helical segment. Residues 24–249 (QDAVSKPIRY…YKNVMKERRI (226 aa)) are Periplasmic-facing. The POTRA domain occupies 29–98 (KPIRYVKIEG…DAVHIKITEQ (70 aa)).

This sequence belongs to the FtsQ/DivIB family. FtsQ subfamily. In terms of assembly, part of a complex composed of FtsB, FtsL and FtsQ.

The protein localises to the cell inner membrane. Essential cell division protein. May link together the upstream cell division proteins, which are predominantly cytoplasmic, with the downstream cell division proteins, which are predominantly periplasmic. May control correct divisome assembly. This is Cell division protein FtsQ from Methylomonas methanica (strain DSM 25384 / MC09).